Consider the following 92-residue polypeptide: Alpha-conotoxin FrXXA (92 aa).

The first 24 residues, 1-24 (MPKLEMMLLVLLILPLSYFDSAGG), serve as a signal peptide directing secretion. The propeptide occupies 25–45 (QAVKVDGHGDGMDRYLQRDDR). Cystine bridges form between Cys-63–Cys-72, Cys-68–Cys-80, Cys-73–Cys-90, and Cys-78–Cys-92.

This sequence belongs to the conotoxin D superfamily. In terms of assembly, homodimer; disulfide-linked. Post-translationally, the homodimer contains 10 disulfide bonds. Expressed by the venom duct.

It localises to the secreted. Functionally, alpha-conotoxins act on postsynaptic membranes, they bind to the nicotinic acetylcholine receptors (nAChR) and thus inhibit them. Through its two C-terminal domains, this homodimeric protein would bind to two nAChR allosteric sites, located outside the nAChR C-loop of the principal binding face and at the adjacent binding interface in a clockwise direction. This toxin blocks both neuronal and muscular subtypes: human alpha-7/CHRNA7, human alpha-3-beta-2 (CHRNA3-CHRNB2), human alpha-4-beta-2 (CHRNA4-CHRNB2), mouse adult muscular subtype alpha-1-beta-1-delta-epsilon (CHRNA1-CHRNB1-CHRND-CHRNE), and mouse fetal muscular subtype alpha-1-beta-1-gamma-delta (CHRNA1-CHRNB1-CHRNG-CHRND). Shows different dissociation rates towards the different subtypes, with a very slow rate towards alpha-7 subtype (almost irreversible), followed by the adult muscular subtype, the fetal muscular subtype, alpha-3-beta-2 and alpha-4-beta-2 (almost entirely reversible within a few minutes of washing). In Conus fergusoni (Ferguson's cone), this protein is Alpha-conotoxin FrXXA.